We begin with the raw amino-acid sequence, 93 residues long: DNA/RNA-binding protein Alba (93 aa).

The residue at position 11 (Lys11) is an N6-acetyllysine.

This sequence belongs to the histone-like Alba family. Acetylated. Acetylation at Lys-11 decreases DNA-binding affinity.

The protein localises to the cytoplasm. It is found in the chromosome. Its function is as follows. Binds double-stranded DNA tightly but without sequence specificity. Involved in DNA compaction. This chain is DNA/RNA-binding protein Alba, found in Pyrococcus furiosus (strain ATCC 43587 / DSM 3638 / JCM 8422 / Vc1).